The chain runs to 300 residues: NADH-cytochrome b5 reductase 1 (300 aa).

The chain crosses the membrane as a helical span at residues 8 to 28 (PLVVFATVATIIISFVTLYFF). A compositionally biased stretch (low complexity) spans 34-45 (SSTTSSSSSSSS). Positions 34 to 54 (SSTTSSSSSSSSKSKKGSPAL) are disordered. Residues 57 to 160 (DKFQKFPLIS…RGPKGFFTYT (104 aa)) enclose the FAD-binding FR-type domain. Residues 140 to 155 (AEKQVGDFVEIRGPKG) and 166 to 198 (SLGLIAGGTGIAPMYQIITAIMNNPEDKTKVHL) contribute to the FAD site.

Belongs to the flavoprotein pyridine nucleotide cytochrome reductase family. As to quaternary structure, monomer. Component of the 2-(3-amino-3-carboxypropyl)histidine synthase complex composed of DPH1, DPH2, DPH3 and a NADH-dependent reductase, predominantly CBR1. Requires FAD as cofactor.

It localises to the mitochondrion outer membrane. The catalysed reaction is 2 Fe(III)-[cytochrome b5] + NADH = 2 Fe(II)-[cytochrome b5] + NAD(+) + H(+). It catalyses the reaction 2 Fe(3+)-[Dph3] + NADH = 2 Fe(2+)-[Dph3] + NAD(+) + H(+). The protein operates within protein modification; peptidyl-diphthamide biosynthesis. Functionally, NADH-dependent reductase for DPH3 and cytochrome b5. Required for the first step of diphthamide biosynthesis, a post-translational modification of histidine which occurs in elongation factor 2. DPH1 and DPH2 transfer a 3-amino-3-carboxypropyl (ACP) group from S-adenosyl-L-methionine (SAM) to a histidine residue, the reaction is assisted by a reduction system comprising DPH3 and a NADH-dependent reductase, predominantly CBR1. By reducing DPH3, also involved in the formation of the tRNA wobble base modification mcm5s 2U (5-methoxycarbonylmethyl-2-thiouridine), mediated by the elongator complex. The cytochrome b5/NADH cytochrome b5 reductase electron transfer system supports the catalytic activity of several sterol biosynthetic enzymes. The sequence is that of NADH-cytochrome b5 reductase 1 (CBR1) from Lodderomyces elongisporus (strain ATCC 11503 / CBS 2605 / JCM 1781 / NBRC 1676 / NRRL YB-4239) (Yeast).